The primary structure comprises 348 residues: Acetylesterase (348 aa).

An N-terminal signal peptide occupies residues 1 to 16; the sequence is MRSILVIPSFVAVLNA. N-linked (GlcNAc...) asparagine glycans are attached at residues Asn-64, Asn-165, Asn-218, Asn-223, and Asn-297.

Belongs to the carbohydrate esterase CE16 family. Post-translationally, N-glycosylated.

Its subcellular location is the secreted. It catalyses the reaction an acetyl ester + H2O = an aliphatic alcohol + acetate + H(+). Acetylesterase that acts as an exo-deacetylase. Shows activity towards naphtyl acetate, triacetin, as well as towards glucose- and xylose acetates. Liberates acetic acid from xylo-oligomers. This chain is Acetylesterase, found in Hypocrea jecorina (Trichoderma reesei).